Consider the following 312-residue polypeptide: MAEALPEAGRYFCHSCTAEITPRLPEYTCPRCDSGFIEELPETSRNSESNSSNNSGTDQNRPSFENIESAQFTLPSGYGQVTFGIFNEGLDFPMFGTSGPVEETRDGESRREHQSRQRYGARQPRARMSTRRGAGRNEGVPTLEGIIQQLVNGIIAPTAMSNLGVGPWGVLHSNPMDYAWGANGLDTIITQLLNQFENTGPPPADTDKIQALPTIQITEEHVGFGLECPVCKEDYTVGESVRQLPCNHLFHNDCIIPWLEQHDTCPVCRKSLSGQNTATNPPGLTDMTFSSSSTSSSSSTSPTDENNTANNS.

4 residues coordinate Zn(2+): C13, C16, C29, and C32. The C4-type zinc-finger motif lies at 13 to 32 (CHSCTAEITPRLPEYTCPRC). Disordered stretches follow at residues 41–63 (PETS…NRPS) and 96–139 (GTSG…RNEG). The span at 44 to 55 (SRNSESNSSNNS) shows a compositional bias: low complexity. Residues 102–115 (EETRDGESRREHQS) show a composition bias toward basic and acidic residues. Basic residues predominate over residues 124-134 (PRARMSTRRGA). The RING-type zinc finger occupies 228-269 (CPVCKEDYTVGESVRQLPCNHLFHNDCIIPWLEQHDTCPVCR). The disordered stretch occupies residues 275 to 312 (QNTATNPPGLTDMTFSSSSTSSSSSTSPTDENNTANNS). Residues 290–301 (SSSSTSSSSSTS) are compositionally biased toward low complexity. Positions 302–312 (PTDENNTANNS) are enriched in polar residues.

It is found in the cytoplasm. Its subcellular location is the nucleus. The enzyme catalyses S-ubiquitinyl-[E2 ubiquitin-conjugating enzyme]-L-cysteine + [acceptor protein]-L-lysine = [E2 ubiquitin-conjugating enzyme]-L-cysteine + N(6)-ubiquitinyl-[acceptor protein]-L-lysine.. The protein operates within protein modification; protein ubiquitination. E3 ubiquitin-protein ligase that mediates ubiquitination oF target proteins. Depending on the associated E2 ligase, mediates 'Lys-27'-, 'Lys-29'-, 'Lys-48'- and/or 'Lys-63'-linked polyubiquitination of substrates. Part of a BAG6-dependent quality control process ensuring that proteins of the secretory pathway that are mislocalized to the cytosol are degraded by the proteasome. Probably acts by providing the ubiquitin ligase activity associated with the BAG6 complex and be responsible for ubiquitination of the hydrophobic mislocalized proteins and their targeting to the proteasome. This is E3 ubiquitin-protein ligase RNF126-B from Xenopus laevis (African clawed frog).